Here is a 335-residue protein sequence, read N- to C-terminus: Mycobacterial beta-ketoacyl-[acyl-carrier-protein] synthase III (335 aa).

Active-site residues include Cys-122 and His-258. An ACP-binding region spans residues 259–263 (QANSR). Asn-289 is a catalytic residue.

The protein belongs to the thiolase-like superfamily. FabH family. Homodimer.

Its subcellular location is the cytoplasm. The enzyme catalyses malonyl-[ACP] + dodecanoyl-CoA + H(+) = 3-oxotetradecanoyl-[ACP] + CO2 + CoA. It functions in the pathway lipid metabolism; fatty acid biosynthesis. Its pathway is lipid metabolism; mycolic acid biosynthesis. Its function is as follows. Catalyzes the condensation reaction of fatty acid synthesis by the addition to an acyl acceptor of two carbons from malonyl-ACP. Catalyzes the first condensation reaction which initiates fatty acid synthesis and may therefore play a role in governing the total rate of fatty acid production. Possesses both acetoacetyl-ACP synthase and acetyl transacylase activities. Its substrate specificity determines the biosynthesis of branched-chain and/or straight-chain of fatty acids. This is Mycobacterial beta-ketoacyl-[acyl-carrier-protein] synthase III from Mycolicibacterium paratuberculosis (strain ATCC BAA-968 / K-10) (Mycobacterium paratuberculosis).